The primary structure comprises 367 residues: Putative methylthioribose-1-phosphate isomerase (367 aa).

Residues 65 to 67, Arg106, and Gln218 each bind substrate; that span reads RGA. Residue Asp259 is the Proton donor of the active site. 269–270 contributes to the substrate binding site; it reads NK.

It belongs to the eIF-2B alpha/beta/delta subunits family. MtnA subfamily.

It catalyses the reaction 5-(methylsulfanyl)-alpha-D-ribose 1-phosphate = 5-(methylsulfanyl)-D-ribulose 1-phosphate. Its function is as follows. Catalyzes the interconversion of methylthioribose-1-phosphate (MTR-1-P) into methylthioribulose-1-phosphate (MTRu-1-P). The polypeptide is Putative methylthioribose-1-phosphate isomerase (Sulfolobus acidocaldarius (strain ATCC 33909 / DSM 639 / JCM 8929 / NBRC 15157 / NCIMB 11770)).